The sequence spans 604 residues: Testis-expressed protein 13C-1 (604 aa).

4 disordered regions span residues 314-337, 374-397, 485-523, and 538-580; these read EGEG…SHKD, PVMP…RPKI, CLNA…HPRK, and ATKQ…SANC. Over residues 322–333 the composition is skewed to polar residues; it reads QGTSLHGDSSNN. The span at 544-572 shows a compositional bias: basic and acidic residues; the sequence is KQPEGIKSLESKQPQETKSSESKQQEKPL.

This sequence belongs to the TEX13 family.

In terms of biological role, plays a role in transcriptional repression. The chain is Testis-expressed protein 13C-1 from Mus musculus (Mouse).